A 285-amino-acid chain; its full sequence is Dermonecrotic toxin LlSicTox-alphaIII2 (285 aa).

The active site involves histidine 12. Mg(2+) contacts are provided by glutamate 32 and aspartate 34. Residue histidine 47 is the Nucleophile of the active site. A disulfide bond links cysteine 51 and cysteine 57. Aspartate 91 is a Mg(2+) binding site.

It belongs to the arthropod phospholipase D family. Class I subfamily. Mg(2+) serves as cofactor. As to expression, expressed by the venom gland.

The protein resides in the secreted. It catalyses the reaction an N-(acyl)-sphingosylphosphocholine = an N-(acyl)-sphingosyl-1,3-cyclic phosphate + choline. The catalysed reaction is an N-(acyl)-sphingosylphosphoethanolamine = an N-(acyl)-sphingosyl-1,3-cyclic phosphate + ethanolamine. It carries out the reaction a 1-acyl-sn-glycero-3-phosphocholine = a 1-acyl-sn-glycero-2,3-cyclic phosphate + choline. The enzyme catalyses a 1-acyl-sn-glycero-3-phosphoethanolamine = a 1-acyl-sn-glycero-2,3-cyclic phosphate + ethanolamine. Its function is as follows. Dermonecrotic toxins cleave the phosphodiester linkage between the phosphate and headgroup of certain phospholipids (sphingolipid and lysolipid substrates), forming an alcohol (often choline) and a cyclic phosphate. This toxin acts on sphingomyelin (SM) (228.2 U/mg). It may also act on ceramide phosphoethanolamine (CPE), lysophosphatidylcholine (LPC) and lysophosphatidylethanolamine (LPE), but not on lysophosphatidylserine (LPS), and lysophosphatidylglycerol (LPG). It acts by transphosphatidylation, releasing exclusively cyclic phosphate products as second products. Induces dermonecrosis, hemolysis, increased vascular permeability, edema, inflammatory response, and platelet aggregation. Is lethal to mice. The polypeptide is Dermonecrotic toxin LlSicTox-alphaIII2 (Loxosceles laeta (South American recluse spider)).